A 187-amino-acid polypeptide reads, in one-letter code: Protein GrpE (187 aa).

A disordered region spans residues 1–22 (MADEQNLDAQAQDQAAEAGAGD). Residues 7–22 (LDAQAQDQAAEAGAGD) are compositionally biased toward low complexity.

Belongs to the GrpE family. As to quaternary structure, homodimer.

It is found in the cytoplasm. Participates actively in the response to hyperosmotic and heat shock by preventing the aggregation of stress-denatured proteins, in association with DnaK and GrpE. It is the nucleotide exchange factor for DnaK and may function as a thermosensor. Unfolded proteins bind initially to DnaJ; upon interaction with the DnaJ-bound protein, DnaK hydrolyzes its bound ATP, resulting in the formation of a stable complex. GrpE releases ADP from DnaK; ATP binding to DnaK triggers the release of the substrate protein, thus completing the reaction cycle. Several rounds of ATP-dependent interactions between DnaJ, DnaK and GrpE are required for fully efficient folding. The chain is Protein GrpE from Pseudomonas syringae pv. tomato (strain ATCC BAA-871 / DC3000).